We begin with the raw amino-acid sequence, 367 residues long: Anhydro-N-acetylmuramic acid kinase (367 aa).

11–18 contributes to the ATP binding site; that stretch reads GTSLDGVD.

This sequence belongs to the anhydro-N-acetylmuramic acid kinase family.

It carries out the reaction 1,6-anhydro-N-acetyl-beta-muramate + ATP + H2O = N-acetyl-D-muramate 6-phosphate + ADP + H(+). The protein operates within amino-sugar metabolism; 1,6-anhydro-N-acetylmuramate degradation. It functions in the pathway cell wall biogenesis; peptidoglycan recycling. Its function is as follows. Catalyzes the specific phosphorylation of 1,6-anhydro-N-acetylmuramic acid (anhMurNAc) with the simultaneous cleavage of the 1,6-anhydro ring, generating MurNAc-6-P. Is required for the utilization of anhMurNAc either imported from the medium or derived from its own cell wall murein, and thus plays a role in cell wall recycling. The protein is Anhydro-N-acetylmuramic acid kinase of Chromobacterium violaceum (strain ATCC 12472 / DSM 30191 / JCM 1249 / CCUG 213 / NBRC 12614 / NCIMB 9131 / NCTC 9757 / MK).